We begin with the raw amino-acid sequence, 367 residues long: Viral cathepsin (367 aa).

The N-terminal stretch at 1–25 (MRKYHSNIMHKIITFVSLLWTFVVC) is a signal peptide. The propeptide at 26 to 156 (DEISLHTSSS…IVKGAPDIRL (131 aa)) is activation peptide. 2 N-linked (GlcNAc...) asparagine; by host glycosylation sites follow: N103 and N135. Intrachain disulfides connect C177-C218, C211-C251, and C306-C354. Residue C180 is part of the active site. Residues H313 and N333 contribute to the active site.

This sequence belongs to the peptidase C1 family. Post-translationally, synthesized as an inactive proenzyme and activated by proteolytic removal of the inhibitory propeptide.

It carries out the reaction Endopeptidase of broad specificity, hydrolyzing substrates of both cathepsin L and cathepsin B.. Functionally, cysteine protease that plays an essential role in host liquefaction to facilitate horizontal transmission of the virus. May participate in the degradation of foreign protein expressed by the baculovirus system. The polypeptide is Viral cathepsin (VCATH) (Lepidoptera (butterflies and moths)).